The chain runs to 302 residues: Lipoyl synthase (302 aa).

Residues Cys54, Cys59, Cys65, Cys80, Cys84, Cys87, and Ser291 each contribute to the [4Fe-4S] cluster site. Residues 66–280 (WSRKTATYML…RIYGKSIGFK (215 aa)) form the Radical SAM core domain.

This sequence belongs to the radical SAM superfamily. Lipoyl synthase family. Requires [4Fe-4S] cluster as cofactor.

The protein localises to the cytoplasm. It catalyses the reaction [[Fe-S] cluster scaffold protein carrying a second [4Fe-4S](2+) cluster] + N(6)-octanoyl-L-lysyl-[protein] + 2 oxidized [2Fe-2S]-[ferredoxin] + 2 S-adenosyl-L-methionine + 4 H(+) = [[Fe-S] cluster scaffold protein] + N(6)-[(R)-dihydrolipoyl]-L-lysyl-[protein] + 4 Fe(3+) + 2 hydrogen sulfide + 2 5'-deoxyadenosine + 2 L-methionine + 2 reduced [2Fe-2S]-[ferredoxin]. Its pathway is protein modification; protein lipoylation via endogenous pathway; protein N(6)-(lipoyl)lysine from octanoyl-[acyl-carrier-protein]: step 2/2. In terms of biological role, catalyzes the radical-mediated insertion of two sulfur atoms into the C-6 and C-8 positions of the octanoyl moiety bound to the lipoyl domains of lipoate-dependent enzymes, thereby converting the octanoylated domains into lipoylated derivatives. In Leptospira borgpetersenii serovar Hardjo-bovis (strain JB197), this protein is Lipoyl synthase.